Reading from the N-terminus, the 892-residue chain is Transmembrane channel-like protein 2-B (892 aa).

A disordered region spans residues 29-125 (GINQNLRREE…DESMSEGEMA (97 aa)). 2 stretches are compositionally biased toward basic residues: residues 48–58 (RRAKKRRMNRR) and 66–77 (RSKKMRMRVRKN). Over residues 103–112 (PSSCSSSSDN) the composition is skewed to low complexity. 9 consecutive transmembrane segments (helical) span residues 235 to 255 (LVLF…MGIP), 275 to 295 (FSVL…YGFY), 308 to 328 (LPLS…MVVI), 403 to 423 (LANV…YAVV), 444 to 464 (EVEI…EAIA), 482 to 502 (IFAL…DEVN), 616 to 636 (LIFN…LVGI), 671 to 691 (FYMG…IYSI), and 736 to 756 (GLII…LNAV). The span at 772–785 (QMQRDEEKNRRNNK) shows a compositional bias: basic and acidic residues. Disordered stretches follow at residues 772–791 (QMQR…TNQV) and 796–892 (EDLL…PPRR). The span at 862-878 (PRQPGPLPGNPRGPPPG) shows a compositional bias: pro residues.

This sequence belongs to the TMC family. As to expression, in adults, expression is restricted to the hair cells of inner ear and lateral line organ. Expressed at higher levels in the larval lateral-line neuromasts than in the larval inner ear.

It localises to the membrane. In terms of biological role, probable component of the mechanotransducer (MET) non-selective cation channel. The protein is Transmembrane channel-like protein 2-B of Danio rerio (Zebrafish).